Reading from the N-terminus, the 147-residue chain is Large ribosomal subunit protein uL15 (147 aa).

The segment covering 1–20 (MTMHLNDLKPADGARTERTR) has biased composition (basic and acidic residues). The interval 1-64 (MTMHLNDLKP…GGQTPMQRRL (64 aa)) is disordered. The span at 23–33 (RGIGSGLGKTC) shows a compositional bias: gly residues. Over residues 34 to 47 (GRGHKGSFARKGGG) the composition is skewed to basic residues.

It belongs to the universal ribosomal protein uL15 family. As to quaternary structure, part of the 50S ribosomal subunit.

Its function is as follows. Binds to the 23S rRNA. This Xanthomonas campestris pv. campestris (strain 8004) protein is Large ribosomal subunit protein uL15.